The primary structure comprises 127 residues: Large ribosomal subunit protein eL8 (127 aa).

This sequence belongs to the eukaryotic ribosomal protein eL8 family. As to quaternary structure, part of the 50S ribosomal subunit. Probably part of the RNase P complex.

It is found in the cytoplasm. In terms of biological role, multifunctional RNA-binding protein that recognizes the K-turn motif in ribosomal RNA, the RNA component of RNase P, box H/ACA, box C/D and box C'/D' sRNAs. This Picrophilus torridus (strain ATCC 700027 / DSM 9790 / JCM 10055 / NBRC 100828 / KAW 2/3) protein is Large ribosomal subunit protein eL8.